The following is a 64-amino-acid chain: Large ribosomal subunit protein uL29 (64 aa).

The protein belongs to the universal ribosomal protein uL29 family.

The chain is Large ribosomal subunit protein uL29 from Maridesulfovibrio salexigens (strain ATCC 14822 / DSM 2638 / NCIMB 8403 / VKM B-1763) (Desulfovibrio salexigens).